We begin with the raw amino-acid sequence, 214 residues long: CASP-like protein 0U1 (214 aa).

Topologically, residues 1-82 (MATSEAPLLK…GFTSFYQFKG (82 aa)) are cytoplasmic. Residues 83–103 (VVGVYAAFWVYTVLLIGLYLF) traverse the membrane as a helical segment. Over 104-112 (SRGPPPGTE) the chain is Extracellular. A helical transmembrane segment spans residues 113-133 (FVVHALFTLCMIAFVSLSVIS). Residues 134–153 (CTSTVIESDYSVCKNAAYAK) lie on the Cytoplasmic side of the membrane. The chain crosses the membrane as a helical span at residues 154–174 (ASLVFAALVVVLNCATCAFVF). At 175-214 (KQWRSLQFVGMPENFRPFGRHRHKHGHHAGDADDAIPTHP) the chain is on the extracellular side. Positions 194–214 (RHRHKHGHHAGDADDAIPTHP) are disordered.

The protein belongs to the Casparian strip membrane proteins (CASP) family. Homodimer and heterodimers.

It is found in the cell membrane. This is CASP-like protein 0U1 from Ostreococcus tauri.